A 246-amino-acid chain; its full sequence is Ly6/PLAUR domain-containing protein 4 (246 aa).

Residues 1 to 26 form the signal peptide; that stretch reads MILQAWRSLQLLYLLEAISLLPCTEA. N-linked (GlcNAc...) asparagine glycosylation is present at Asn-117. In terms of domain architecture, UPAR/Ly6 spans 142 to 223; sequence CPSCVGKHDQ…INVLDKSEAV (82 aa). Residue Ala-225 is the site of GPI-anchor amidated alanine attachment. Positions 226–246 are cleaved as a propeptide — removed in mature form; that stretch reads GHCSQGISWSVLLCLLILLRD.

It localises to the cell membrane. The protein is Ly6/PLAUR domain-containing protein 4 (Lypd4) of Mus musculus (Mouse).